Reading from the N-terminus, the 685-residue chain is MSTPASAAPAALVRVPAGTTAGTAVREAGYPSKGPDVVVVVRDAEGQLKDLSWVPDTDVEVEPVAANTDDGRSVIRHSAAHVLAQAVQQEFPEAKLGIGPPIKDGFYYDFAVDRPFTPEDLASLEKRMKKIIKGSQRFSRRVVESLEDARAELAKEPFKLELIDDKSGIDDPEIMEVGGNELTIYDNLDPRTGEKVWGDLCRGPHIPTTKHIPAFKLTRSSAAYWRGNQDNADLQRIYGTAWESAEAQDQHLELLAEAERRDHRKLGSELDLFSFPDELGSGLPVFHPRGGIIRTEMEDYSRKRHVEEGYEFVNTPHITKGHLYEVSGHLDWYRDGMFPAMHIDEELNEDGTVRKPGQDYYLKPMNCPMHNLIFRSRGRSYRELPLRLFEFGSVYRYEKSGVVHGLTRVRGMTQDDAHIYCTREQMRDELATTLQFVLGLLKDYGLDDFYLELSTKNPDKFVGDDAVWEEATATLAEVAESSGLNLVPDPGGAAFYGPKISVQVQDALGRTWQMSTIQLDFNLPERFDLEYTANDGTKQRPVMIHRALFGSIERFFGVLTEHYAGAFPAWLAPVQVVGIPVAETFADHLFDVVKRLKAAGVRAEVDASDDRMQKKIFNNTAQKVPFMLLAGARDVEAGAVSFRFRDGTQVNGVPVDDAVRIVTEWIGRRENASPTAELLQPGKEG.

Residues 1–65 enclose the TGS domain; it reads MSTPASAAPA…DTDVEVEPVA (65 aa). A catalytic region spans residues 262–568; the sequence is DHRKLGSELD…LTEHYAGAFP (307 aa). Zn(2+) contacts are provided by Cys-367, His-418, and His-545.

It belongs to the class-II aminoacyl-tRNA synthetase family. Homodimer. Zn(2+) is required as a cofactor.

It localises to the cytoplasm. It carries out the reaction tRNA(Thr) + L-threonine + ATP = L-threonyl-tRNA(Thr) + AMP + diphosphate + H(+). Catalyzes the attachment of threonine to tRNA(Thr) in a two-step reaction: L-threonine is first activated by ATP to form Thr-AMP and then transferred to the acceptor end of tRNA(Thr). Also edits incorrectly charged L-seryl-tRNA(Thr). This chain is Threonine--tRNA ligase, found in Rhodococcus jostii (strain RHA1).